A 219-amino-acid polypeptide reads, in one-letter code: Ribose-5-phosphate isomerase A (219 aa).

Residues 28–31 (SGST), 81–84 (DGAD), and 94–97 (KGGG) each bind substrate. The Proton acceptor role is filled by Glu103. Residue Lys121 participates in substrate binding.

Belongs to the ribose 5-phosphate isomerase family. As to quaternary structure, homodimer.

The catalysed reaction is aldehydo-D-ribose 5-phosphate = D-ribulose 5-phosphate. The protein operates within carbohydrate degradation; pentose phosphate pathway; D-ribose 5-phosphate from D-ribulose 5-phosphate (non-oxidative stage): step 1/1. Catalyzes the reversible conversion of ribose-5-phosphate to ribulose 5-phosphate. In Haemophilus influenzae (strain ATCC 51907 / DSM 11121 / KW20 / Rd), this protein is Ribose-5-phosphate isomerase A.